The following is a 118-amino-acid chain: Large ribosomal subunit protein uL24 (118 aa).

Belongs to the universal ribosomal protein uL24 family. As to quaternary structure, part of the 50S ribosomal subunit.

In terms of biological role, one of two assembly initiator proteins, it binds directly to the 5'-end of the 23S rRNA, where it nucleates assembly of the 50S subunit. Functionally, one of the proteins that surrounds the polypeptide exit tunnel on the outside of the subunit. This Prochlorococcus marinus subsp. pastoris (strain CCMP1986 / NIES-2087 / MED4) protein is Large ribosomal subunit protein uL24.